Reading from the N-terminus, the 391-residue chain is 4-coumarate--CoA ligase (391 aa).

The protein belongs to the ATP-dependent AMP-binding enzyme family.

It catalyses the reaction (E)-4-coumarate + ATP + CoA = (E)-4-coumaroyl-CoA + AMP + diphosphate. Its function is as follows. Converts p-coumaric acid into p-coumaryl CoA. This is necessary for the activation of the photoactive yellow protein (PYP) chromophore. This Halorhodospira halophila (Ectothiorhodospira halophila) protein is 4-coumarate--CoA ligase (pcl).